An 83-amino-acid polypeptide reads, in one-letter code: Small ribosomal subunit protein bS20 (83 aa).

The tract at residues 1–21 (MPNIKSAIKRVRTTETAEERN) is disordered. The span at 12 to 21 (RTTETAEERN) shows a compositional bias: basic and acidic residues.

This sequence belongs to the bacterial ribosomal protein bS20 family.

In terms of biological role, binds directly to 16S ribosomal RNA. The polypeptide is Small ribosomal subunit protein bS20 (Staphylococcus epidermidis (strain ATCC 35984 / DSM 28319 / BCRC 17069 / CCUG 31568 / BM 3577 / RP62A)).